Reading from the N-terminus, the 201-residue chain is Recombination protein RecR (201 aa).

The C4-type zinc-finger motif lies at Cys-57 to Cys-72. The Toprim domain occupies Gly-81–Pro-176.

Belongs to the RecR family.

In terms of biological role, may play a role in DNA repair. It seems to be involved in an RecBC-independent recombinational process of DNA repair. It may act with RecF and RecO. The sequence is that of Recombination protein RecR from Histophilus somni (strain 2336) (Haemophilus somnus).